Here is a 61-residue protein sequence, read N- to C-terminus: Metallothionein-2 (61 aa).

N-acetylmethionine is present on Met-1. Residues 1 to 29 form a beta region; sequence MDPNCSCATDGSCSCAGSCKCKQCKCTSC. A divalent metal cation is bound by residues Cys-5, Cys-7, Cys-13, Cys-15, Cys-19, Cys-21, Cys-24, Cys-26, Cys-29, Cys-33, Cys-34, Cys-36, Cys-37, Cys-41, Cys-44, Cys-48, Cys-50, and Cys-57. Positions 30–61 are alpha; the sequence is KKSCCSCCPVGCAKCSQGCICKEASDKCSCCA. A Phosphoserine modification is found at Ser-58. The a divalent metal cation site is built by Cys-59 and Cys-60.

It belongs to the metallothionein superfamily. Type 1 family.

In terms of biological role, metallothioneins have a high content of cysteine residues that bind various heavy metals; these proteins are transcriptionally regulated by both heavy metals and glucocorticoids. In Rattus norvegicus (Rat), this protein is Metallothionein-2 (Mt2).